A 580-amino-acid polypeptide reads, in one-letter code: Negative elongation factor B (580 aa).

Lys519 bears the N6-acetyllysine mark. The interval 552 to 580 is disordered; that stretch reads DHRKPSPTQAAETPALDLPLPSVPAPATL. Residue Ser557 is modified to Phosphoserine.

It belongs to the NELF-B family. The NELF complex is composed of NELFA, NELFB, NELFCD and NELFE; the N-terminus of NELFB binds to the NELFA:NELFCD subcomplex. Binds RNA which may help to stabilize the NELF complex on nucleic acid Interacts with the first BRCT repeat of BRCA1. Interacts with KIAA1191. Isoform 1 and isoform 2 interact with NELFA, NELFCD and NELFE. Isoform 1 is expressed in the kidney, liver, adipose and lung. Isoform 2 is widely expressed.

It is found in the nucleus. Functionally, essential component of the NELF complex, a complex that negatively regulates the elongation of transcription by RNA polymerase II (Pol II). The NELF complex, which acts via an association with the DSIF complex and causes transcriptional pausing, is counteracted by the P-TEFb kinase complex. May be able to induce chromatin unfolding. Essential for early embryogenesis; plays an important role in maintaining the undifferentiated state of embryonic stem cells (ESCs) by preventing unscheduled expression of developmental genes. Plays a key role in establishing the responsiveness of stem cells to developmental cues; facilitates plasticity and cell fate commitment in ESCs by establishing the appropriate expression level of signaling molecules. Supports the transcription of genes involved in energy metabolism in cardiomyocytes; facilitates the association of transcription initiation factors with the promoters of the metabolism-related genes. The protein is Negative elongation factor B (Nelfb) of Mus musculus (Mouse).